A 467-amino-acid chain; its full sequence is Serum response factor homolog B (467 aa).

Over residues 1–15 (MELNMNQYDNIESND) the composition is skewed to polar residues. 3 disordered regions span residues 1–38 (MELN…KSGR), 115–245 (NTPD…NNLT), and 301–467 (IQNI…PSDL). An MADS-box domain is found at 36-96 (SGRRKINIEF…GHVYTFATPK (61 aa)). Over residues 128 to 205 (NNNNGNNSNN…NNNNNNNNNN (78 aa)) the composition is skewed to low complexity. Residues 206-220 (CKEEQNMNIPNERKS) show a composition bias toward basic and acidic residues. Low complexity-rich tracts occupy residues 222 to 245 (NNIN…NNLT), 301 to 334 (IQNI…SNNI), 347 to 392 (GSNS…NSNN), and 401 to 440 (PSPI…YGGY). Over residues 442 to 467 (QPFSRNYPLQSNIATNSTVSKAPSDL) the composition is skewed to polar residues.

It is found in the nucleus. The polypeptide is Serum response factor homolog B (srfB) (Dictyostelium discoideum (Social amoeba)).